Here is a 947-residue protein sequence, read N- to C-terminus: Mitogen-activated protein kinase kinase kinase 14 (947 aa).

Disordered stretches follow at residues 1 to 37 (MAVM…KKQS) and 135 to 171 (KGKR…TPEQ). Over residues 135–151 (KGKRRSKARKKRKKKSS) the composition is skewed to basic residues. The region spanning 400-655 (ATHQLRLGRG…ELGGKVNRAL (256 aa)) is the Protein kinase domain. The segment at 401-653 (THQLRLGRGS…AAELGGKVNR (253 aa)) is interaction with ZFP91. ATP is bound by residues 406–414 (LGRGSFGEV) and Lys429. Asp515 acts as the Proton acceptor in catalysis. At Thr559 the chain carries Phosphothreonine. Disordered stretches follow at residues 662 to 766 (KSPW…ATVP) and 805 to 830 (LSDD…GVHS). Residues 665–674 (WRGEYKEPRH) show a composition bias toward basic and acidic residues. Residues 713-727 (LQPPLPPEPPEPNKS) show a composition bias toward pro residues. Residues 741-752 (EPLPLSSLEPAP) are compositionally biased toward low complexity. Residues 814 to 829 (SKASQSSRDTLSSGVH) show a composition bias toward polar residues.

This sequence belongs to the protein kinase superfamily. STE Ser/Thr protein kinase family. MAP kinase kinase kinase subfamily. In terms of assembly, interacts with TRAF2, TRAF5, TRAF6, IKKA and NFKB2/P100. Interacts with TRAF3 and PELI3. Interacts with NIBP; the interaction is direct. Interacts with ARRB1 and ARRB2. Interacts with GRB10. Interacts with ZFP91. Interacts with NLRP12; this interaction promotes proteasomal degradation of MAP3K14. Directly interacts with DDX3X. Interacts (via C-terminus and kinase domain) with PPPC3A (via N-terminus) and PPP3CB. Post-translationally, autophosphorylated. Phosphorylation at Thr-559 is required to activate its kinase activity and 'Lys-63'-linked polyubiquitination. Phosphorylated by CHUK/IKKA leading to MAP3K14 destabilization. In terms of processing, ubiquitinated. Undergoes both 'Lys-48'- and 'Lys-63'-linked polyubiquitination. 'Lys-48'-linked polyubiquitination leads to its degradation by the proteasome, while 'Lys-63'-linked polyubiquitination stabilizes and activates it. In terms of tissue distribution, weakly expressed in testis, small intestine, spleen, thymus, peripheral blood leukocytes, prostate, ovary and colon.

It is found in the cytoplasm. It catalyses the reaction L-seryl-[protein] + ATP = O-phospho-L-seryl-[protein] + ADP + H(+). The catalysed reaction is L-threonyl-[protein] + ATP = O-phospho-L-threonyl-[protein] + ADP + H(+). Functionally, lymphotoxin beta-activated kinase which seems to be exclusively involved in the activation of NF-kappa-B and its transcriptional activity. Phosphorylates CHUK/IKKA, thereby promoting proteolytic processing of NFKB2/P100, which leads to NF-kappa-B activation via the non-canonical pathway. Has an essential role in the non-canonical NF-kappa-B signaling that regulates genes encoding molecules involved in B-cell survival, lymphoid organogenesis, and immune response. Could act in a receptor-selective manner. This is Mitogen-activated protein kinase kinase kinase 14 from Homo sapiens (Human).